A 27-amino-acid chain; its full sequence is WDVNDCIHFCLIGVVERSYTECHTMCT.

Disulfide bonds link cysteine 6-cysteine 26 and cysteine 10-cysteine 22.

As to expression, expressed by the venom duct.

It localises to the secreted. The polypeptide is Conotoxin flf14a (Conus anabathrum floridanus (Florida cone)).